A 299-amino-acid chain; its full sequence is GTPase Era (299 aa).

The 169-residue stretch at 2-170 folds into the Era-type G domain; it reads KTGFVALAGK…LDLIIENLPE (169 aa). Positions 10-17 are G1; it reads GKPNVGKS. 10-17 lines the GTP pocket; sequence GKPNVGKS. Residues 36–40 form a G2 region; it reads QTTRN. Residues 57-60 form a G3 region; that stretch reads DTPG. GTP-binding positions include 57–61 and 119–122; these read DTPGI and NKID. The segment at 119 to 122 is G4; it reads NKID. Positions 149 to 151 are G5; it reads TSA. The KH type-2 domain maps to 201–278; that stretch reads TYEEIPHSVA…FLDLHVKVKR (78 aa).

The protein belongs to the TRAFAC class TrmE-Era-EngA-EngB-Septin-like GTPase superfamily. Era GTPase family. As to quaternary structure, monomer.

The protein resides in the cytoplasm. The protein localises to the cell inner membrane. An essential GTPase that binds both GDP and GTP, with rapid nucleotide exchange. Plays a role in 16S rRNA processing and 30S ribosomal subunit biogenesis and possibly also in cell cycle regulation and energy metabolism. The protein is GTPase Era of Thermosipho melanesiensis (strain DSM 12029 / CIP 104789 / BI429).